The primary structure comprises 282 residues: MTDRYAVFGNPISHSKSPFIHGQFAAPTQESLTYEAILAPVDGFEASLTAFFNAGGKGANVTVPFKEQAFALCDSISPEAKLAGAVNTLSLLADGTIRGDNTDGLGLVADLIANLGSLQDKRVLLIGAGGAARGCILPLLNAGIAQLIISNRTHTKAQLLVDIFTSVDNGAFANRVTAVEMNELAGEFDIIINSTSASLVGELPPLPTHIITTQTVCYDMMYGASVTAFNQWALSQGAAKVIDGLGMLVGQAAKSFTLWRGIEPDTQVVLTLLRDKLMAEPK.

Shikimate is bound by residues 15–17 and threonine 62; that span reads SKS. The active-site Proton acceptor is the lysine 66. Positions 87 and 103 each coordinate shikimate. Residues 127-131, 151-156, and methionine 220 contribute to the NADP(+) site; these read GAGGA and NRTHTK. Tyrosine 222 is a binding site for shikimate. Glycine 244 contacts NADP(+).

Belongs to the shikimate dehydrogenase family. As to quaternary structure, homodimer.

The enzyme catalyses shikimate + NADP(+) = 3-dehydroshikimate + NADPH + H(+). It participates in metabolic intermediate biosynthesis; chorismate biosynthesis; chorismate from D-erythrose 4-phosphate and phosphoenolpyruvate: step 4/7. Functionally, involved in the biosynthesis of the chorismate, which leads to the biosynthesis of aromatic amino acids. Catalyzes the reversible NADPH linked reduction of 3-dehydroshikimate (DHSA) to yield shikimate (SA). The sequence is that of Shikimate dehydrogenase (NADP(+)) from Shewanella baltica (strain OS155 / ATCC BAA-1091).